The primary structure comprises 132 residues: UPF0299 membrane protein YohJ (132 aa).

The next 4 helical transmembrane spans lie at 7 to 27 (IIWQ…AGIF), 31 to 51 (LLPV…VLLA), 63 to 83 (GCYV…VGVM), and 93 to 113 (FGPV…VMSW).

The protein belongs to the UPF0299 family.

The protein localises to the cell inner membrane. The chain is UPF0299 membrane protein YohJ from Shigella dysenteriae serotype 1 (strain Sd197).